Reading from the N-terminus, the 444-residue chain is Xaa-Pro dipeptidase (444 aa).

Positions 247, 258, 340, 385, and 424 each coordinate Mn(2+).

It belongs to the peptidase M24B family. Bacterial-type prolidase subfamily. Mn(2+) serves as cofactor.

The enzyme catalyses Xaa-L-Pro dipeptide + H2O = an L-alpha-amino acid + L-proline. In terms of biological role, splits dipeptides with a prolyl residue in the C-terminal position. The sequence is that of Xaa-Pro dipeptidase from Proteus mirabilis (strain HI4320).